The chain runs to 154 residues: Large ribosomal subunit protein uL22c (154 aa).

The protein belongs to the universal ribosomal protein uL22 family. Part of the 50S ribosomal subunit.

It localises to the plastid. The protein resides in the chloroplast. Its function is as follows. This protein binds specifically to 23S rRNA. In terms of biological role, the globular domain of the protein is located near the polypeptide exit tunnel on the outside of the subunit, while an extended beta-hairpin is found that lines the wall of the exit tunnel in the center of the 70S ribosome. The sequence is that of Large ribosomal subunit protein uL22c (rpl22) from Guizotia abyssinica (Niger).